A 432-amino-acid chain; its full sequence is ATP-dependent RNA helicase RhlB (432 aa).

The short motif at Lys9–Ala37 is the Q motif element. Positions Leu40–Val219 constitute a Helicase ATP-binding domain. Ala53–Thr60 is an ATP binding site. The DEAD box signature appears at Asp165 to Asp168. The 146-residue stretch at Arg245–Leu390 folds into the Helicase C-terminal domain. The interval Leu393–Ser432 is disordered. A compositionally biased stretch (low complexity) spans Gln404 to Asn423.

The protein belongs to the DEAD box helicase family. RhlB subfamily. As to quaternary structure, component of the RNA degradosome, which is a multiprotein complex involved in RNA processing and mRNA degradation.

The protein resides in the cytoplasm. The enzyme catalyses ATP + H2O = ADP + phosphate + H(+). Functionally, DEAD-box RNA helicase involved in RNA degradation. Has RNA-dependent ATPase activity and unwinds double-stranded RNA. This Proteus mirabilis (strain HI4320) protein is ATP-dependent RNA helicase RhlB.